Reading from the N-terminus, the 117-residue chain is Ribosome maturation factor RimP (117 aa).

This sequence belongs to the RimP family.

It localises to the cytoplasm. Required for maturation of 30S ribosomal subunits. The protein is Ribosome maturation factor RimP of Rickettsia prowazekii (strain Madrid E).